Here is a 483-residue protein sequence, read N- to C-terminus: Allantoate deiminase 1 (483 aa).

Positions 1-30 are cleaved as a signal peptide; the sequence is MYSATASNTFFLLSCFLLFCLLSAPSCVSM. Mn(2+)-binding residues include His-125, Asp-136, Glu-173, His-239, and His-457.

Belongs to the peptidase M20A family. Homodimer. Requires Mn(2+) as cofactor. In terms of tissue distribution, expressed in roots, stems and leaves. Not detected in nodules.

The protein localises to the endoplasmic reticulum. It carries out the reaction allantoate + H2O + 2 H(+) = (S)-2-ureidoglycine + NH4(+) + CO2. Its activity is regulated as follows. Inhibited by borate, fluoride, L-Asn and L-Asp. Involved in the catabolism of purine nucleotides. Can use allantoate as substrate. The sequential activity of AAH, UGLYAH and UAH allows a complete purine breakdown without the intermediate generation of urea. This chain is Allantoate deiminase 1, found in Glycine max (Soybean).